Here is a 412-residue protein sequence, read N- to C-terminus: Ornithine cyclodeaminase (412 aa).

Asn-237, Ala-238, Asp-316, Thr-348, Met-349, Leu-350, His-351, Asp-369, Asp-392, and Val-393 together coordinate NAD(+).

Belongs to the AgrE/ArgZ ornithine cyclodeaminase family. It depends on NAD(+) as a cofactor.

The catalysed reaction is L-ornithine = L-proline + NH4(+). Functionally, catalyzes the conversion of ornithine to proline, with the release of ammonia. This chain is Ornithine cyclodeaminase, found in Methanopyrus kandleri (strain AV19 / DSM 6324 / JCM 9639 / NBRC 100938).